We begin with the raw amino-acid sequence, 570 residues long: Glycine--tRNA ligase (570 aa).

Arg-99 and Glu-165 together coordinate substrate. ATP-binding positions include Arg-197–Glu-199, Ile-207–Phe-212, Glu-324–Cys-325, and Gly-443–Arg-446. Residue Phe-212 to Glu-216 participates in substrate binding. Glu-439–Gly-443 is a binding site for substrate.

It belongs to the class-II aminoacyl-tRNA synthetase family.

Its subcellular location is the cytoplasm. It carries out the reaction tRNA(Gly) + glycine + ATP = glycyl-tRNA(Gly) + AMP + diphosphate. Catalyzes the attachment of glycine to tRNA(Gly). The protein is Glycine--tRNA ligase of Pyrococcus horikoshii (strain ATCC 700860 / DSM 12428 / JCM 9974 / NBRC 100139 / OT-3).